We begin with the raw amino-acid sequence, 1097 residues long: Platelet-derived growth factor receptor beta (1097 aa).

The first 31 residues, 1 to 31, serve as a signal peptide directing secretion; sequence MGLPEVMPASVLRGQLLLFVLLLLGPQISQG. Ig-like C2-type domains are found at residues 32–119, 128–209, and 213–308; these read LVIT…YIFV, PMDS…YSLQ, and INVS…INVT. Residues 32-531 are Extracellular-facing; it reads LVITPPGPEF…VVPHSLPFKV (500 aa). N-linked (GlcNAc...) asparagine glycans are attached at residues asparagine 44, asparagine 88, and asparagine 102. Cysteines 53 and 99 form a disulfide. A disulfide bridge connects residues cysteine 148 and cysteine 189. Residue asparagine 214 is glycosylated (N-linked (GlcNAc...) asparagine). A disulfide bridge links cysteine 234 with cysteine 290. Residues asparagine 291, asparagine 306, asparagine 353, asparagine 370, asparagine 444, asparagine 467, and asparagine 478 are each glycosylated (N-linked (GlcNAc...) asparagine). Residues 415–523 enclose the Ig-like C2-type 4 domain; it reads PVRVLELSES…GRDSQEVTVV (109 aa). Cysteine 435 and cysteine 507 form a disulfide bridge. A helical membrane pass occupies residues 532–552; that stretch reads VVISAILALVVLTVISLIILI. Over 553-1097 the chain is Cytoplasmic; the sequence is MLWQRKPRYE…PLAEAEDSFL (545 aa). 3 positions are modified to phosphotyrosine; by autocatalysis: tyrosine 561, tyrosine 578, and tyrosine 580. The 363-residue stretch at 599–961 folds into the Protein kinase domain; sequence LVLGRTLGSG…QLVLLLERLL (363 aa). Residues 605–613 and lysine 633 contribute to the ATP site; that span reads LGSGAFGQV. Tyrosine 685 carries the post-translational modification Phosphotyrosine; by ABL1 and ABL2. Residues tyrosine 715, tyrosine 739, tyrosine 750, tyrosine 762, tyrosine 770, tyrosine 774, and tyrosine 777 each carry the phosphotyrosine; by autocatalysis modification. Catalysis depends on aspartate 825, which acts as the Proton acceptor. Phosphotyrosine; by autocatalysis is present on tyrosine 856. Residues tyrosine 933 and tyrosine 969 each carry the phosphotyrosine; by ABL1 and ABL2 modification. Phosphotyrosine; by autocatalysis occurs at positions 1008 and 1020. The tract at residues 1016–1097 is disordered; that stretch reads TDNDYIIPLP…PLAEAEDSFL (82 aa). A compositionally biased stretch (polar residues) spans 1042–1059; sequence SLASSTLNEVNTSSTISC. Positions 1072–1081 are enriched in low complexity; it reads EPEAQLEQPQ.

Belongs to the protein kinase superfamily. Tyr protein kinase family. CSF-1/PDGF receptor subfamily. In terms of assembly, interacts with homodimeric PDGFB and PDGFD, and with heterodimers formed by PDGFA and PDGFB. May also interact with homodimeric PDGFC. Monomer in the absence of bound ligand. Interaction with homodimeric PDGFB, heterodimers formed by PDGFA and PDGFB or homodimeric PDGFD, leads to receptor dimerization, where both PDGFRA homodimers and heterodimers with PDGFRB are observed. Interacts with SH2B2/APS. Interacts directly (tyrosine phosphorylated) with SHB. Interacts (tyrosine phosphorylated) with PIK3R1 and RASA1. Interacts (tyrosine phosphorylated) with CBL. Interacts (tyrosine phosphorylated) with SRC and SRC family kinases. Interacts (tyrosine phosphorylated) with PIK3C2B, maybe indirectly. Interacts (tyrosine phosphorylated) with SHC1, GRB7, GRB10 and NCK1. Interaction with GRB2 is mediated by SHC1. Interacts (via C-terminus) with NHERF1. N-glycosylated. Post-translationally, ubiquitinated. After autophosphorylation, the receptor is polyubiquitinated, leading to its degradation. In terms of processing, autophosphorylated on tyrosine residues upon ligand binding. Autophosphorylation occurs in trans, i.e. one subunit of the dimeric receptor phosphorylates tyrosine residues on the other subunit. Phosphorylation at Tyr-578, and to a lesser degree, Tyr-580 is important for interaction with SRC. Phosphorylation at Tyr-715 is important for interaction with GRB2. Phosphorylation at Tyr-739 and Tyr-750 is important for interaction with PIK3R1. Phosphorylation at Tyr-750 is important for interaction with NCK1. Phosphorylation at Tyr-770 and Tyr-856 is important for interaction with RASA1/GAP. Phosphorylation at Tyr-856 is important for efficient phosphorylation of PLCG1 and PTPN11, resulting in increased phosphorylation of AKT1, MAPK1/ERK2 and/or MAPK3/ERK1, PDCD6IP/ALIX and STAM, and in increased cell proliferation. Phosphorylation at Tyr-1008 is important for interaction with PTPN11. Phosphorylation at Tyr-1008 and Tyr-1020 is important for interaction with PLCG1. Dephosphorylated by PTPRJ at Tyr-750, Tyr-856, Tyr-1008 and Tyr-1020. Dephosphorylated by PTPN2 at Tyr-578 and Tyr-1020.

The protein localises to the cell membrane. The protein resides in the cytoplasmic vesicle. Its subcellular location is the lysosome lumen. It catalyses the reaction L-tyrosyl-[protein] + ATP = O-phospho-L-tyrosyl-[protein] + ADP + H(+). Present in an inactive conformation in the absence of bound ligand. Binding of PDGFB and/or PDGFD leads to dimerization and activation by autophosphorylation on tyrosine residues. In terms of biological role, tyrosine-protein kinase that acts as a cell-surface receptor for homodimeric PDGFB and PDGFD and for heterodimers formed by PDGFA and PDGFB, and plays an essential role in the regulation of embryonic development, cell proliferation, survival, differentiation, chemotaxis and migration. Plays an essential role in blood vessel development by promoting proliferation, migration and recruitment of pericytes and smooth muscle cells to endothelial cells. Plays a role in the migration of vascular smooth muscle cells and the formation of neointima at vascular injury sites. Required for normal development of the cardiovascular system. Required for normal recruitment of pericytes (mesangial cells) in the kidney glomerulus, and for normal formation of a branched network of capillaries in kidney glomeruli. Promotes rearrangement of the actin cytoskeleton and the formation of membrane ruffles. Binding of its cognate ligands - homodimeric PDGFB, heterodimers formed by PDGFA and PDGFB or homodimeric PDGFD -leads to the activation of several signaling cascades; the response depends on the nature of the bound ligand and is modulated by the formation of heterodimers between PDGFRA and PDGFRB. Phosphorylates PLCG1, PIK3R1, PTPN11, RASA1/GAP, CBL, SHC1 and NCK1. Activation of PLCG1 leads to the production of the cellular signaling molecules diacylglycerol and inositol 1,4,5-trisphosphate, mobilization of cytosolic Ca(2+) and the activation of protein kinase C. Phosphorylation of PIK3R1, the regulatory subunit of phosphatidylinositol 3-kinase, leads to the activation of the AKT1 signaling pathway. Phosphorylation of SHC1, or of the C-terminus of PTPN11, creates a binding site for GRB2, resulting in the activation of HRAS, RAF1 and down-stream MAP kinases, including MAPK1/ERK2 and/or MAPK3/ERK1. Promotes phosphorylation and activation of SRC family kinases. Promotes phosphorylation of PDCD6IP/ALIX and STAM. Receptor signaling is down-regulated by protein phosphatases that dephosphorylate the receptor and its down-stream effectors, and by rapid internalization of the activated receptor. The chain is Platelet-derived growth factor receptor beta (Pdgfrb) from Rattus norvegicus (Rat).